Here is a 219-residue protein sequence, read N- to C-terminus: Uracil-DNA glycosylase (219 aa).

Catalysis depends on Asp-61, which acts as the Proton acceptor.

This sequence belongs to the uracil-DNA glycosylase (UDG) superfamily. UNG family.

It localises to the cytoplasm. It catalyses the reaction Hydrolyzes single-stranded DNA or mismatched double-stranded DNA and polynucleotides, releasing free uracil.. In terms of biological role, excises uracil residues from the DNA which can arise as a result of misincorporation of dUMP residues by DNA polymerase or due to deamination of cytosine. The polypeptide is Uracil-DNA glycosylase (Neisseria gonorrhoeae (strain ATCC 700825 / FA 1090)).